Here is a 150-residue protein sequence, read N- to C-terminus: Deoxyuridine 5'-triphosphate nucleotidohydrolase (150 aa).

Residues 69 to 71 (RSG), N82, 86 to 88 (LID), and M96 contribute to the substrate site.

Belongs to the dUTPase family. The cofactor is Mg(2+).

It catalyses the reaction dUTP + H2O = dUMP + diphosphate + H(+). It functions in the pathway pyrimidine metabolism; dUMP biosynthesis; dUMP from dCTP (dUTP route): step 2/2. This enzyme is involved in nucleotide metabolism: it produces dUMP, the immediate precursor of thymidine nucleotides and it decreases the intracellular concentration of dUTP so that uracil cannot be incorporated into DNA. This chain is Deoxyuridine 5'-triphosphate nucleotidohydrolase, found in Acinetobacter baylyi (strain ATCC 33305 / BD413 / ADP1).